A 446-amino-acid chain; its full sequence is Probable ribosomal RNA small subunit methyltransferase B (446 aa).

S-adenosyl-L-methionine is bound by residues 260–266 (CAAPGGK), Asp284, Asp311, and Asp330. Cys383 serves as the catalytic Nucleophile.

The protein belongs to the class I-like SAM-binding methyltransferase superfamily. RsmB/NOP family.

The protein resides in the cytoplasm. The enzyme catalyses cytidine(967) in 16S rRNA + S-adenosyl-L-methionine = 5-methylcytidine(967) in 16S rRNA + S-adenosyl-L-homocysteine + H(+). Functionally, specifically methylates the cytosine at position 967 (m5C967) of 16S rRNA. The polypeptide is Probable ribosomal RNA small subunit methyltransferase B (Synechocystis sp. (strain ATCC 27184 / PCC 6803 / Kazusa)).